The chain runs to 422 residues: F-box protein At3g12350 (422 aa).

An F-box domain is found at 5-52 (ALPFCEIPEDLQLRILSLLTPAEISSFACTSKRFASLCQEDGKIWHVM). Composition is skewed to basic and acidic residues over residues 197–207 (NNRREDQRSSG) and 242–252 (KEKERQASRTK). 2 disordered regions span residues 197 to 216 (NNRREDQRSSGDESDDLISS) and 226 to 252 (LANKTSPGGDRRRQKRKEKERQASRTK).

This chain is F-box protein At3g12350, found in Arabidopsis thaliana (Mouse-ear cress).